Consider the following 230-residue polypeptide: MIIIGIDEAGRGPVLGPMVVCAFAIEKEREEELKKLGVKDSKELTKNKRAYLKKLLENLGYVEKRILEAEEINQLMNSINLNDIEINAFSKVAKNLIEKLNIRDDEIEIYIDACSTNTKKFEDSFKDKIEDIIKERNLNIKIIAEHKADAKYPVVSAASIIAKAERDEIIDYYKKIYGDIGSGYPSDPKTIKFLEDYFKKHKKLPDIARTHWKTCKRILDKSKQTKLIIE.

The RNase H type-2 domain maps to 1–224 (MIIIGIDEAG…CKRILDKSKQ (224 aa)). A divalent metal cation is bound by residues D7, E8, and D112.

The protein belongs to the RNase HII family. It depends on Mn(2+) as a cofactor. The cofactor is Mg(2+).

It localises to the cytoplasm. It catalyses the reaction Endonucleolytic cleavage to 5'-phosphomonoester.. Functionally, endonuclease that specifically degrades the RNA of RNA-DNA hybrids. This chain is Ribonuclease HII (rnhB), found in Methanocaldococcus jannaschii (strain ATCC 43067 / DSM 2661 / JAL-1 / JCM 10045 / NBRC 100440) (Methanococcus jannaschii).